We begin with the raw amino-acid sequence, 56 residues long: UPF0339 protein NMA1193/NMA1859 (56 aa).

It belongs to the UPF0339 family.

The sequence is that of UPF0339 protein NMA1193/NMA1859 from Neisseria meningitidis serogroup A / serotype 4A (strain DSM 15465 / Z2491).